The following is a 398-amino-acid chain: AT-rich interactive domain-containing protein 6 (398 aa).

Positions 25 to 87 are disordered; sequence EPLEPENDHN…PKTEGENAKK (63 aa). Residues 106 to 197 form the ARID domain; sequence PVEQVAFLRE…ALLEYEKCLR (92 aa). Positions 213–236 are disordered; the sequence is SSVEKEPSSHQGSGSGRARRDSAA. Residues 305–398 enclose the sHSP domain; sequence VGPVADWVKI…RLFIRVPFEQ (94 aa).

It belongs to the small heat shock protein (HSP20) family.

Its subcellular location is the nucleus. In Arabidopsis thaliana (Mouse-ear cress), this protein is AT-rich interactive domain-containing protein 6 (ARID6).